A 289-amino-acid chain; its full sequence is Ferri-bacillibactin esterase BesA (289 aa).

Active-site charge relay system residues include S163, E225, and H263.

It belongs to the esterase D family.

Its subcellular location is the cytoplasm. In terms of biological role, catalyzes the hydrolysis of the trilactone cycle of ferri-bacillibactin (ferri-BB) complex, leading to the formation of bacillibactin monomers and to cytosolic iron release, thus making iron available for metabolic use. Can also hydrolyze bacillibactin (BB), however the catalytic efficiency for ferri-BB hydrolysis is much higher than for BB. This Bacillus subtilis (strain 168) protein is Ferri-bacillibactin esterase BesA (besA).